Consider the following 90-residue polypeptide: Barrier-to-autointegration factor A (90 aa).

This sequence belongs to the BAF family. In terms of assembly, homodimer. Interacts with nemp1a and nemp1b. In terms of processing, phosphorylated during S and M phases.

The protein resides in the nucleus. Its subcellular location is the chromosome. It is found in the nucleus envelope. The protein localises to the cytoplasm. In terms of biological role, non-specific DNA-binding protein that plays key roles in mitotic nuclear reassembly, chromatin organization, DNA damage response, gene expression and intrinsic immunity against foreign DNA. Contains two non-specific double-stranded DNA (dsDNA)-binding sites which promote DNA cross-bridging. Plays a key role in nuclear membrane reformation at the end of mitosis by driving formation of a single nucleus in a spindle-independent manner. Transiently cross-bridges anaphase chromosomes via its ability to bridge distant DNA sites, leading to the formation of a dense chromatin network at the chromosome ensemble surface that limits membranes to the surface. Also acts as a negative regulator of innate immune activation by restricting CGAS activity toward self-DNA upon acute loss of nuclear membrane integrity. Outcompetes CGAS for DNA-binding, thereby preventing CGAS activation and subsequent damaging autoinflammatory responses. Also involved in DNA damage response; acts by inhibiting the ADP-ribosyltransferase activity of PARP1. Involved in the recognition of exogenous dsDNA in the cytosol: associates with exogenous dsDNA immediately after its appearance in the cytosol at endosome breakdown and is required to avoid autophagy. This chain is Barrier-to-autointegration factor A (banf1-a), found in Xenopus laevis (African clawed frog).